An 89-amino-acid chain; its full sequence is Small ribosomal subunit protein uS15 (89 aa).

This sequence belongs to the universal ribosomal protein uS15 family. As to quaternary structure, part of the 30S ribosomal subunit. Forms a bridge to the 50S subunit in the 70S ribosome, contacting the 23S rRNA.

Its function is as follows. One of the primary rRNA binding proteins, it binds directly to 16S rRNA where it helps nucleate assembly of the platform of the 30S subunit by binding and bridging several RNA helices of the 16S rRNA. Functionally, forms an intersubunit bridge (bridge B4) with the 23S rRNA of the 50S subunit in the ribosome. This Bartonella bacilliformis (strain ATCC 35685 / KC583 / Herrer 020/F12,63) protein is Small ribosomal subunit protein uS15.